The chain runs to 633 residues: Putative serine/threonine-protein kinase L232 (633 aa).

Positions 10–314 (YTIVDKLSEG…QSRKLFYEIL (305 aa)) constitute a Protein kinase domain. Residues 16-24 (LSEGTYGIV) and Lys39 each bind ATP. Asp133 serves as the catalytic Proton acceptor.

It belongs to the protein kinase superfamily. Ser/Thr protein kinase family.

The catalysed reaction is L-seryl-[protein] + ATP = O-phospho-L-seryl-[protein] + ADP + H(+). The enzyme catalyses L-threonyl-[protein] + ATP = O-phospho-L-threonyl-[protein] + ADP + H(+). This chain is Putative serine/threonine-protein kinase L232, found in Acanthamoeba polyphaga mimivirus (APMV).